Here is a 405-residue protein sequence, read N- to C-terminus: Nuclear hormone receptor family member nhr-199 (405 aa).

The segment at residues 20–111 (IPYCLICSEV…MGMQRSSVQQ (92 aa)) is a DNA-binding region (nuclear receptor). 2 NR C4-type zinc fingers span residues 23 to 44 (CLIC…CRAC) and 60 to 94 (CGRN…CKAC). An NR LBD domain is found at 126–376 (RGKPVLNKLR…PFSRIHGNQK (251 aa)).

The protein belongs to the nuclear hormone receptor family.

The protein localises to the nucleus. Orphan nuclear receptor. In Caenorhabditis elegans, this protein is Nuclear hormone receptor family member nhr-199 (nhr-199).